An 81-amino-acid chain; its full sequence is RNA-binding protein Hfq (81 aa).

In terms of domain architecture, Sm spans 9-68; that stretch reads DPYLNILRKERVPVSIFLVNGIKLQGQIESFDQFVILLKNTVSQMVYKHAISTVVPSRTI.

It belongs to the Hfq family. Homohexamer.

Its function is as follows. RNA chaperone that binds small regulatory RNA (sRNAs) and mRNAs to facilitate mRNA translational regulation in response to envelope stress, environmental stress and changes in metabolite concentrations. Also binds with high specificity to tRNAs. This chain is RNA-binding protein Hfq, found in Marinomonas sp. (strain MWYL1).